A 41-amino-acid chain; its full sequence is Photosystem I reaction center subunit IX (41 aa).

A helical membrane pass occupies residues 7-27 (YLSTAPVVALIWFTFTAGLLI).

It belongs to the PsaJ family.

The protein localises to the plastid. The protein resides in the chloroplast thylakoid membrane. Functionally, may help in the organization of the PsaE and PsaF subunits. The protein is Photosystem I reaction center subunit IX of Pleurastrum terricola (Filamentous green alga).